Here is a 352-residue protein sequence, read N- to C-terminus: Molybdenum import ATP-binding protein ModC (352 aa).

The ABC transporter domain maps to 1 to 229 (MLELNFSQTL…SVMHPWLPKE (229 aa)). Position 31-38 (31-38 (GVSGAGKT)) interacts with ATP. One can recognise a Mop domain in the interval 289 to 352 (QTSIRNVLRA…AQVKSVSITA (64 aa)).

The protein belongs to the ABC transporter superfamily. Molybdate importer (TC 3.A.1.8) family. As to quaternary structure, the complex is composed of two ATP-binding proteins (ModC), two transmembrane proteins (ModB) and a solute-binding protein (ModA).

The protein resides in the cell inner membrane. The catalysed reaction is molybdate(out) + ATP + H2O = molybdate(in) + ADP + phosphate + H(+). Part of the ABC transporter complex ModABC involved in molybdenum import. Responsible for energy coupling to the transport system. This chain is Molybdenum import ATP-binding protein ModC, found in Salmonella paratyphi A (strain ATCC 9150 / SARB42).